Here is an 864-residue protein sequence, read N- to C-terminus: Carbohydrate-responsive element-binding protein (864 aa).

2 disordered regions span residues 15-41 and 53-77; these read PRVVPSPDSDSDTDLEDPSPRRSAGGL and MVSSPHSDSLTRRRDQEGPVGLADF. Phosphoserine is present on residues serine 20, serine 23, and serine 25. Threonine 27 carries the post-translational modification Phosphothreonine. Phosphoserine is present on serine 196. Disordered stretches follow at residues 332–397, 449–468, 489–533, 547–570, and 583–602; these read SSGI…APGP, PGVSTLPAPTTFVPTPQPGP, PHFT…TARD, PEQALEPPTMPGTLLRPPESPQDT, and PIPAPTPPRPPPGPATLAPP. Residues 351–368 are compositionally biased toward polar residues; sequence GMTPHSGNTRLQARNSCS. The segment covering 513 to 531 has biased composition (low complexity); that stretch reads ASPPTLASATASPTATATA. A Phosphoserine; by AMPK modification is found at serine 566. A compositionally biased stretch (pro residues) spans 583-596; that stretch reads PIPAPTPPRPPPGP. Residues serine 614, serine 626, and serine 643 each carry the phosphoserine modification. A bHLH domain is found at 661 to 715; it reads NRRITHISAEQKRRFNIKLGFDTLHGLVSTLSAQPSLKVSKATTLQKTAEYILML. Positions 715–736 are leucine-zipper; sequence LQQERAAMQEEAQQLRDEIEEL.

Binds DNA as a heterodimer with TCFL4/MLX. In terms of processing, phosphorylation at Ser-566 by AMPK inactivates the DNA-binding activity. Expressed in the ventricular and intermediate zones of the developing spinal cord of 12.5 dpc embryos. In later embryos expressed in a variety of tissues.

It is found in the nucleus. Transcriptional repressor. Binds to the canonical and non-canonical E box sequences 5'-CACGTG-3'. The sequence is that of Carbohydrate-responsive element-binding protein (Mlxipl) from Mus musculus (Mouse).